The sequence spans 320 residues: Reticulocalbin-2 (320 aa).

The signal sequence occupies residues 1–25 (MRLGPRPAVLGLLLLLLLYAAVAGA). EF-hand domains lie at 64 to 99 (EQQR…SFKH) and 100 to 135 (YAMQ…RVID). Positions 77, 79, 81, 88, 113, 115, 117, 119, and 124 each coordinate Ca(2+). The residue at position 140 (threonine 140) is a Phosphothreonine. EF-hand domains follow at residues 150–185 (FRQL…HPEE), 189–224 (MTEF…DPTA), 230–265 (WILV…NNQG), and 266–301 (IAQE…FLTS). Ca(2+) is bound by residues aspartate 167, glutamate 176, aspartate 202, asparagine 204, aspartate 206, glutamate 213, aspartate 243, aspartate 245, aspartate 247, arginine 249, glutamate 254, aspartate 279, asparagine 281, aspartate 283, lysine 285, and glutamate 290. Positions 317–320 (HDEL) match the Prevents secretion from ER motif.

It belongs to the CREC family. In terms of assembly, binds the snake venom phospholipase complex taipoxin. Ubiquitous.

Its subcellular location is the endoplasmic reticulum lumen. In terms of biological role, not known. Binds calcium. The sequence is that of Reticulocalbin-2 (Rcn2) from Rattus norvegicus (Rat).